The sequence spans 418 residues: D-amino acid dehydrogenase (418 aa).

Position 3-17 (3-17 (VLVLGAGVAGVSSAW)) interacts with FAD.

This sequence belongs to the DadA oxidoreductase family. The cofactor is FAD.

It catalyses the reaction a D-alpha-amino acid + A + H2O = a 2-oxocarboxylate + AH2 + NH4(+). The protein operates within amino-acid degradation; D-alanine degradation; NH(3) and pyruvate from D-alanine: step 1/1. Functionally, oxidative deamination of D-amino acids. The chain is D-amino acid dehydrogenase from Neisseria meningitidis serogroup C / serotype 2a (strain ATCC 700532 / DSM 15464 / FAM18).